The primary structure comprises 578 residues: Membrane protein insertase YidC (578 aa).

A helical transmembrane segment spans residues 3–23 (IQRSILIVALAVVSYLLVLQW). The interval 34–71 (AASASMNTTQGLPDTPSAAGTSSDVPTAQSGAAGSEAA) is disordered. Polar residues predominate over residues 37 to 65 (ASMNTTQGLPDTPSAAGTSSDVPTAQSGA). The next 5 membrane-spanning stretches (helical) occupy residues 361-381 (LELT…FWLL), 387-407 (LIGN…LAFF), 457-477 (LGGC…YWVL), 500-520 (PFFI…MLNP), and 535-555 (PIIF…YWVV).

It belongs to the OXA1/ALB3/YidC family. Type 1 subfamily. Interacts with the Sec translocase complex via SecD. Specifically interacts with transmembrane segments of nascent integral membrane proteins during membrane integration.

It localises to the cell inner membrane. Required for the insertion and/or proper folding and/or complex formation of integral membrane proteins into the membrane. Involved in integration of membrane proteins that insert both dependently and independently of the Sec translocase complex, as well as at least some lipoproteins. Aids folding of multispanning membrane proteins. This Pseudomonas paraeruginosa (strain DSM 24068 / PA7) (Pseudomonas aeruginosa (strain PA7)) protein is Membrane protein insertase YidC.